The following is a 195-amino-acid chain: Thymidine kinase (195 aa).

Residues 9 to 16 (STMNAGKS) and 87 to 90 (DEAQ) contribute to the ATP site. The active-site Proton acceptor is the glutamate 88. 4 residues coordinate Zn(2+): cysteine 145, cysteine 147, cysteine 182, and histidine 185.

It belongs to the thymidine kinase family. Homotetramer.

The protein localises to the cytoplasm. It catalyses the reaction thymidine + ATP = dTMP + ADP + H(+). This chain is Thymidine kinase, found in Jannaschia sp. (strain CCS1).